The primary structure comprises 462 residues: Argininosuccinate lyase (462 aa).

It belongs to the lyase 1 family. Argininosuccinate lyase subfamily.

It localises to the cytoplasm. The catalysed reaction is 2-(N(omega)-L-arginino)succinate = fumarate + L-arginine. The protein operates within amino-acid biosynthesis; L-arginine biosynthesis; L-arginine from L-ornithine and carbamoyl phosphate: step 3/3. The sequence is that of Argininosuccinate lyase from Bacillus anthracis (strain A0248).